The sequence spans 190 residues: Pyridoxal 5'-phosphate synthase subunit PdxT (190 aa).

46-48 provides a ligand contact to L-glutamine; sequence GES. The Nucleophile role is filled by C78. L-glutamine-binding positions include R106 and 135–136; that span reads IR. Residues H171 and E173 each act as charge relay system in the active site.

It belongs to the glutaminase PdxT/SNO family. In terms of assembly, in the presence of PdxS, forms a dodecamer of heterodimers. Only shows activity in the heterodimer.

It catalyses the reaction aldehydo-D-ribose 5-phosphate + D-glyceraldehyde 3-phosphate + L-glutamine = pyridoxal 5'-phosphate + L-glutamate + phosphate + 3 H2O + H(+). It carries out the reaction L-glutamine + H2O = L-glutamate + NH4(+). The protein operates within cofactor biosynthesis; pyridoxal 5'-phosphate biosynthesis. In terms of biological role, catalyzes the hydrolysis of glutamine to glutamate and ammonia as part of the biosynthesis of pyridoxal 5'-phosphate. The resulting ammonia molecule is channeled to the active site of PdxS. The sequence is that of Pyridoxal 5'-phosphate synthase subunit PdxT from Dictyoglomus turgidum (strain DSM 6724 / Z-1310).